Reading from the N-terminus, the 334-residue chain is Biotin synthase (334 aa).

The 226-residue stretch at 55–280 folds into the Radical SAM core domain; the sequence is EEIEVEGIIS…HTMLRFAGGR (226 aa). Positions 70, 74, and 77 each coordinate [4Fe-4S] cluster. 3 residues coordinate [2Fe-2S] cluster: Cys-113, Cys-205, and Arg-275.

It belongs to the radical SAM superfamily. Biotin synthase family. Homodimer. The cofactor is [4Fe-4S] cluster. Requires [2Fe-2S] cluster as cofactor.

The catalysed reaction is (4R,5S)-dethiobiotin + (sulfur carrier)-SH + 2 reduced [2Fe-2S]-[ferredoxin] + 2 S-adenosyl-L-methionine = (sulfur carrier)-H + biotin + 2 5'-deoxyadenosine + 2 L-methionine + 2 oxidized [2Fe-2S]-[ferredoxin]. It functions in the pathway cofactor biosynthesis; biotin biosynthesis; biotin from 7,8-diaminononanoate: step 2/2. In terms of biological role, catalyzes the conversion of dethiobiotin (DTB) to biotin by the insertion of a sulfur atom into dethiobiotin via a radical-based mechanism. This is Biotin synthase from Corynebacterium glutamicum (strain ATCC 13032 / DSM 20300 / JCM 1318 / BCRC 11384 / CCUG 27702 / LMG 3730 / NBRC 12168 / NCIMB 10025 / NRRL B-2784 / 534).